The chain runs to 438 residues: Putative F-box/FBD/LRR-repeat protein At2g05300 (438 aa).

Positions 13-59 (EDRISQLPDPLLTQILNLLPTEEAVKTSVLSTRWRTLWLWVPNLELS) constitute an F-box domain. LRR repeat units lie at residues 135-166 (CDSLVSLRLYRLSLVDAEFVSLPCLKILRLKD), 167-192 (IVFHNETTFERLVSSCPVLEELKIDV), 235-261 (CLIIDDSVSESFVVTDLESNAKFDISL), and 318-346 (YVTLNASELEWFPIFLRSSPNLKSLILER). In terms of domain architecture, FBD spans 362–409 (SMSSVPECLLTSLEFVEFKAPICGLGPEMMLVWYFLKNSPTLKKLTLP).

This Arabidopsis thaliana (Mouse-ear cress) protein is Putative F-box/FBD/LRR-repeat protein At2g05300.